Reading from the N-terminus, the 66-residue chain is MPAKTGPRVVVFLECFHCTQKGAQKKFPGVFRYITKKNRHNKSTPLELKKFCPFCLKHTIHKERKK.

Belongs to the bacterial ribosomal protein bL33 family.

The protein resides in the plastid. It is found in the chloroplast. The sequence is that of Large ribosomal subunit protein bL33c from Welwitschia mirabilis (Tree tumbo).